Consider the following 106-residue polypeptide: Large ribosomal subunit protein P2 (106 aa).

Residues 80-106 (AAAAPAKKVVEEKKEESDDDMGMGLFD) form a disordered region.

It belongs to the eukaryotic ribosomal protein P1/P2 family. As to quaternary structure, P1 and P2 exist as dimers at the large ribosomal subunit. In terms of processing, phosphorylated.

Its function is as follows. Plays an important role in the elongation step of protein synthesis. This chain is Large ribosomal subunit protein P2 (rplp2), found in Dictyostelium discoideum (Social amoeba).